Consider the following 640-residue polypeptide: 1-deoxy-D-xylulose-5-phosphate synthase (640 aa).

Residues His75 and 117–119 (GHA) each bind thiamine diphosphate. Asp146 is a Mg(2+) binding site. Residues 147 to 148 (AA), Asn175, and Glu370 each bind thiamine diphosphate. Asn175 provides a ligand contact to Mg(2+).

This sequence belongs to the transketolase family. DXPS subfamily. In terms of assembly, homodimer. Mg(2+) is required as a cofactor. The cofactor is thiamine diphosphate.

It carries out the reaction D-glyceraldehyde 3-phosphate + pyruvate + H(+) = 1-deoxy-D-xylulose 5-phosphate + CO2. It participates in metabolic intermediate biosynthesis; 1-deoxy-D-xylulose 5-phosphate biosynthesis; 1-deoxy-D-xylulose 5-phosphate from D-glyceraldehyde 3-phosphate and pyruvate: step 1/1. In terms of biological role, catalyzes the acyloin condensation reaction between C atoms 2 and 3 of pyruvate and glyceraldehyde 3-phosphate to yield 1-deoxy-D-xylulose-5-phosphate (DXP). The protein is 1-deoxy-D-xylulose-5-phosphate synthase of Chlamydia trachomatis serovar A (strain ATCC VR-571B / DSM 19440 / HAR-13).